The chain runs to 268 residues: MLLWMVLLLCESMAEAQELFPNPELTEFTNSETMDVILKCTIKVDPKNPTLQLFYTFYKNNHVIQDRSPHSVFSAEAKEENSGLYQCMVDTEDGLIQKKSGYLDIQFWTPVSHPVLTLQHEATNLAVGDKVEFLCEAHQGSLPIFYSFYINGEILGKPLAPSGRAASLLASVKAEWSTKNYSCEAKNNISREISELKKFPLVVSGTAWIKSNMLPIWLPASLLGGMVIAAVVLMYFFKPCKKHARPETPTLKEPDSFLYVSVDNQRYK.

Positions 1 to 16 are cleaved as a signal peptide; sequence MLLWMVLLLCESMAEA. Topologically, residues 17–215 are extracellular; that stretch reads QELFPNPELT…TAWIKSNMLP (199 aa). Positions 114 to 194 constitute an Ig-like C2-type domain; that stretch reads PVLTLQHEAT…AKNNISREIS (81 aa). Residues Cys135 and Cys183 are joined by a disulfide bond. N-linked (GlcNAc...) asparagine glycosylation is found at Asn180 and Asn188. Residues 216–236 traverse the membrane as a helical segment; sequence IWLPASLLGGMVIAAVVLMYF. The Cytoplasmic segment spans residues 237–268; it reads FKPCKKHARPETPTLKEPDSFLYVSVDNQRYK.

As to quaternary structure, interacts with class II MHC.

The protein localises to the cell membrane. Its function is as follows. Acts as a MHC class II receptor. When stimulated on its own, does not play a role in cytokine production or the release of cytotoxic granules by NK cells and cytotoxic CD8(+) T cells. Does not act as an Fc receptor. This Mus musculus (Mouse) protein is Fc receptor-like protein 6 (Fcrl6).